The chain runs to 1127 residues: Caprin-2 (1127 aa).

The segment at 67–108 is disordered; it reads YQSPSGHSEEEREGNMKSAKPQVNHSQHGESQRALSPLQSTL. Over residues 99 to 108 the composition is skewed to polar residues; it reads RALSPLQSTL. Coiled coils occupy residues 129-156 and 194-216; these read LKHKIRNIEKKKLKLEDYKDRLKSGEHL and AQKKAQRREHMLKLEAEKKKLRT. Disordered regions lie at residues 382–614, 642–753, and 922–975; these read NKQG…KDPV, DKPS…SSSV, and QCYK…PVDV. Basic and acidic residues-rich tracts occupy residues 402–432 and 440–464; these read KRWDMLTEPDGQEKKQESFKSWEASGKHQEV and EQRKQDTSKLRSTLPEEQKKQEISK. Polar residues-rich tracts occupy residues 512–531 and 544–567; these read PKSWTPSMQSEQNTTKSWTT and TPKSWENNVESQKHSLTSQSQISP. The segment covering 588-597 has biased composition (basic and acidic residues); sequence LNTEPKDVPK. 2 stretches are compositionally biased toward polar residues: residues 665-714 and 741-753; these read KEQN…TSET and QGFQSPPASSSSV. Residues serine 948 and serine 949 each carry the phosphoserine modification. Over residues 956 to 970 the composition is skewed to polar residues; that stretch reads TFNSGDSGQGDSRSM. The region spanning 993-1127 is the C1q domain; it reads PQQMRVAFSA…TFSGYLLYQD (135 aa). Residues aspartate 1078 and glutamate 1084 each coordinate Ca(2+).

Belongs to the caprin family. Homotrimer; via C1q domain. Found in a complex with LRP6, CCNY and CDK14 during G2/M stage; CAPRIN2 functions as a scaffold for the complex by binding to CCNY via its N terminus and to CDK14 via its C terminus. Interacts with LRP5. Interacts with LRP6. Detected in all tissues tested with highest levels of expression in brain and spleen.

Its subcellular location is the cytoplasm. The protein resides in the mitochondrion. It localises to the cell membrane. Its function is as follows. Promotes phosphorylation of the Wnt coreceptor LRP6, leading to increased activity of the canonical Wnt signaling pathway. Facilitates constitutive LRP6 phosphorylation by CDK14/CCNY during G2/M stage of the cell cycle, which may potentiate cells for Wnt signaling. May regulate the transport and translation of mRNAs, modulating for instance the expression of proteins involved in synaptic plasticity in neurons. Involved in regulation of growth as erythroblasts shift from a highly proliferative state towards their terminal phase of differentiation. May be involved in apoptosis. The chain is Caprin-2 from Homo sapiens (Human).